The chain runs to 123 residues: Ribonuclease P protein component 2 (123 aa).

It belongs to the eukaryotic/archaeal RNase P protein component 2 family. In terms of assembly, consists of a catalytic RNA component and at least 4 protein subunits.

It carries out the reaction Endonucleolytic cleavage of RNA, removing 5'-extranucleotides from tRNA precursor.. Part of ribonuclease P, a protein complex that generates mature tRNA molecules by cleaving their 5'-ends. The polypeptide is Ribonuclease P protein component 2 (Aeropyrum pernix (strain ATCC 700893 / DSM 11879 / JCM 9820 / NBRC 100138 / K1)).